We begin with the raw amino-acid sequence, 147 residues long: Putative pre-16S rRNA nuclease (147 aa).

The protein belongs to the YqgF nuclease family.

It localises to the cytoplasm. Its function is as follows. Could be a nuclease involved in processing of the 5'-end of pre-16S rRNA. This chain is Putative pre-16S rRNA nuclease, found in Ureaplasma parvum serovar 3 (strain ATCC 27815 / 27 / NCTC 11736).